We begin with the raw amino-acid sequence, 152 residues long: Large ribosomal subunit protein uL15 (152 aa).

Residues 31–58 form a disordered region; it reads GASCGFGMRGQKSRSGRPTRPGFEGGQM.

Belongs to the universal ribosomal protein uL15 family. As to quaternary structure, part of the 50S ribosomal subunit.

Functionally, binds to the 23S rRNA. The protein is Large ribosomal subunit protein uL15 of Parasynechococcus marenigrum (strain WH8102).